A 122-amino-acid chain; its full sequence is Large ribosomal subunit protein uL14 (122 aa).

This sequence belongs to the universal ribosomal protein uL14 family. In terms of assembly, part of the 50S ribosomal subunit. Forms a cluster with proteins L3 and L19. In the 70S ribosome, L14 and L19 interact and together make contacts with the 16S rRNA in bridges B5 and B8.

In terms of biological role, binds to 23S rRNA. Forms part of two intersubunit bridges in the 70S ribosome. This is Large ribosomal subunit protein uL14 from Staphylococcus aureus (strain MW2).